A 451-amino-acid chain; its full sequence is MREVISIHIGQAGIQVGNACWELYCLEHGIQPDGQMPSDKTIGGGDDAFNTFFSETGAGKHVPRCIFLDLEPTVVDEVRTGTYRQLFHPEQLISGKEDAANNFARGHYTIGKEIVDLALDRIRKLADNCTGLQGFLVFNAVGGGTGSGLGSLLLERLSVDYGKKSKLGFTVYPSPQVSTAVVEPYNSVLSTHSLLEHTDVAVMLDNEAIYDICRRSLDIERPTYTNLNRLIAQVISSLTASLRFDGALNVDVTEFQTNLVPYPRIHFMLSSYAPIISAEKAYHEQLSVAEITNAAFEPASMMVKCDPRHGKYMACCLMYRGDVVPKDVNAAVATIKTKRTIQFVDWCPTGFKCGINYQPPTVVPGGDLAKVQRAVCMISNSTAIGEIFSRLDHKFDLMYAKRAFVHWYVGEGMEEGEFSEAREDLAALEKDFEEVGAESAEGAGEGEGEEY.

Gln-11 lines the GTP pocket. At Lys-40 the chain carries N6-acetyllysine. The GTP site is built by Glu-71, Gly-144, Thr-145, Thr-179, Asn-206, and Asn-228. Residue Glu-71 coordinates Mg(2+). Glu-254 is an active-site residue.

The protein belongs to the tubulin family. In terms of assembly, dimer of alpha and beta chains. A typical microtubule is a hollow water-filled tube with an outer diameter of 25 nm and an inner diameter of 15 nM. Alpha-beta heterodimers associate head-to-tail to form protofilaments running lengthwise along the microtubule wall with the beta-tubulin subunit facing the microtubule plus end conferring a structural polarity. Microtubules usually have 13 protofilaments but different protofilament numbers can be found in some organisms and specialized cells. It depends on Mg(2+) as a cofactor. In terms of processing, undergoes a tyrosination/detyrosination cycle, the cyclic removal and re-addition of a C-terminal tyrosine residue by the enzymes tubulin tyrosine carboxypeptidase (TTCP) and tubulin tyrosine ligase (TTL), respectively. Acetylation of alpha chains at Lys-40 stabilizes microtubules and affects affinity and processivity of microtubule motors. This modification has a role in multiple cellular functions, ranging from cell motility, cell cycle progression or cell differentiation to intracellular trafficking and signaling.

It localises to the cytoplasm. The protein localises to the cytoskeleton. It catalyses the reaction GTP + H2O = GDP + phosphate + H(+). Its function is as follows. Tubulin is the major constituent of microtubules, a cylinder consisting of laterally associated linear protofilaments composed of alpha- and beta-tubulin heterodimers. Microtubules grow by the addition of GTP-tubulin dimers to the microtubule end, where a stabilizing cap forms. Below the cap, tubulin dimers are in GDP-bound state, owing to GTPase activity of alpha-tubulin. This Volvox carteri (Green alga) protein is Tubulin alpha-1/alpha-2 chain (TUBA1).